We begin with the raw amino-acid sequence, 74 residues long: Dermaseptin-B3 (74 aa).

The first 22 residues, methionine 1 to cysteine 22, serve as a signal peptide directing secretion. Positions glutamate 23–glutamate 43 are excised as a propeptide.

Expressed by the skin glands.

It is found in the secreted. Possesses a potent antimicrobial activity against Gram-positive and Gram-negative bacteria. Probably acts by disturbing membrane functions with its amphipathic structure. This Phyllomedusa bicolor (Two-colored leaf frog) protein is Dermaseptin-B3.